The primary structure comprises 100 residues: Small ribosomal subunit protein bS20 (100 aa).

It belongs to the bacterial ribosomal protein bS20 family.

Binds directly to 16S ribosomal RNA. The polypeptide is Small ribosomal subunit protein bS20 (Prochlorococcus marinus (strain MIT 9211)).